Here is a 95-residue protein sequence, read N- to C-terminus: Protein TusB (95 aa).

Belongs to the DsrH/TusB family. As to quaternary structure, heterohexamer, formed by a dimer of trimers. The hexameric TusBCD complex contains 2 copies each of TusB, TusC and TusD. The TusBCD complex interacts with TusE.

It is found in the cytoplasm. Its function is as follows. Part of a sulfur-relay system required for 2-thiolation of 5-methylaminomethyl-2-thiouridine (mnm(5)s(2)U) at tRNA wobble positions. The polypeptide is Protein TusB (Shigella sonnei (strain Ss046)).